We begin with the raw amino-acid sequence, 412 residues long: N-carbamoyl-L-amino-acid amidohydrolase (412 aa).

The a divalent metal cation site is built by His82, Asp93, Glu128, and His193. 5 residues coordinate an N-carbamoyl-L-alpha-amino acid: Gln196, His229, Asn278, Arg291, and Gly360. Positions 212–330 (SIVGVRALRV…DVDEFFNLSP (119 aa)) are involved in dimerization. Position 385 (His385) interacts with a divalent metal cation.

The protein belongs to the peptidase M20 family. Homodimer. The cofactor is Mn(2+). It depends on Ni(2+) as a cofactor. Co(2+) is required as a cofactor. Requires Fe(2+) as cofactor.

The catalysed reaction is an N-carbamoyl-L-alpha-amino acid + H2O + 2 H(+) = an L-alpha-amino acid + NH4(+) + CO2. It catalyses the reaction N-carbamoyl-L-tryptophan + H2O + 2 H(+) = L-tryptophan + NH4(+) + CO2. The enzyme catalyses N-carbamoyl-L-tyrosine + H2O + 2 H(+) = L-tyrosine + NH4(+) + CO2. It carries out the reaction N-carbamoyl-L-phenylalanine + H2O + 2 H(+) = L-phenylalanine + NH4(+) + CO2. In terms of biological role, catalyzes the hydrolysis of aliphatic N-carbamoyl-L-alpha-amino acids to free L-alpha-amino acids. Is strictly L-specific since it is inactive toward N-carbamoyl-D-alpha-amino acids. Shows a preference for aromatic N-carbamoyl-L-alpha-amino acids, such as N-carbamoyl-L-tryptophan and N-carbamoyl-L-tyrosine and, to a lesser extent, N-carbamoyl-L-phenylalanine and the non-natural amino acid N-carbamoyl-L-thienylalanine. Carbamoyl derivatives of beta-alanine and charged aliphatic amino acids are not accepted as substrates. This is N-carbamoyl-L-amino-acid amidohydrolase from Paenarthrobacter aurescens (Arthrobacter aurescens).